The sequence spans 314 residues: DNA-directed RNA polymerase subunit alpha (314 aa).

An alpha N-terminal domain (alpha-NTD) region spans residues Met-1 to Ser-227. The alpha C-terminal domain (alpha-CTD) stretch occupies residues Val-241–Asn-314.

The protein belongs to the RNA polymerase alpha chain family. Homodimer. The RNAP catalytic core consists of 2 alpha, 1 beta, 1 beta' and 1 omega subunit. When a sigma factor is associated with the core the holoenzyme is formed, which can initiate transcription.

It carries out the reaction RNA(n) + a ribonucleoside 5'-triphosphate = RNA(n+1) + diphosphate. DNA-dependent RNA polymerase catalyzes the transcription of DNA into RNA using the four ribonucleoside triphosphates as substrates. This Oenococcus oeni (strain ATCC BAA-331 / PSU-1) protein is DNA-directed RNA polymerase subunit alpha.